A 621-amino-acid chain; its full sequence is 1-deoxy-D-xylulose-5-phosphate synthase (621 aa).

Thiamine diphosphate contacts are provided by residues His80 and 121–123; that span reads GHS. Position 152 (Asp152) interacts with Mg(2+). Residues 153–154, Asn181, Tyr288, and Glu370 contribute to the thiamine diphosphate site; that span reads GA. Position 181 (Asn181) interacts with Mg(2+).

The protein belongs to the transketolase family. DXPS subfamily. In terms of assembly, homodimer. The cofactor is Mg(2+). It depends on thiamine diphosphate as a cofactor.

The enzyme catalyses D-glyceraldehyde 3-phosphate + pyruvate + H(+) = 1-deoxy-D-xylulose 5-phosphate + CO2. It functions in the pathway metabolic intermediate biosynthesis; 1-deoxy-D-xylulose 5-phosphate biosynthesis; 1-deoxy-D-xylulose 5-phosphate from D-glyceraldehyde 3-phosphate and pyruvate: step 1/1. In terms of biological role, catalyzes the acyloin condensation reaction between C atoms 2 and 3 of pyruvate and glyceraldehyde 3-phosphate to yield 1-deoxy-D-xylulose-5-phosphate (DXP). The sequence is that of 1-deoxy-D-xylulose-5-phosphate synthase from Aeromonas hydrophila subsp. hydrophila (strain ATCC 7966 / DSM 30187 / BCRC 13018 / CCUG 14551 / JCM 1027 / KCTC 2358 / NCIMB 9240 / NCTC 8049).